The chain runs to 426 residues: 3-phosphoshikimate 1-carboxyvinyltransferase (426 aa).

Residues K20, S21, and R25 each contribute to the 3-phosphoshikimate site. K20 contributes to the phosphoenolpyruvate binding site. 2 residues coordinate phosphoenolpyruvate: G92 and R120. 3-phosphoshikimate-binding residues include S166, Q168, D312, and K339. Q168 lines the phosphoenolpyruvate pocket. D312 serves as the catalytic Proton acceptor. Residue R385 participates in phosphoenolpyruvate binding.

The protein belongs to the EPSP synthase family. As to quaternary structure, monomer.

It localises to the cytoplasm. The catalysed reaction is 3-phosphoshikimate + phosphoenolpyruvate = 5-O-(1-carboxyvinyl)-3-phosphoshikimate + phosphate. It participates in metabolic intermediate biosynthesis; chorismate biosynthesis; chorismate from D-erythrose 4-phosphate and phosphoenolpyruvate: step 6/7. Functionally, catalyzes the transfer of the enolpyruvyl moiety of phosphoenolpyruvate (PEP) to the 5-hydroxyl of shikimate-3-phosphate (S3P) to produce enolpyruvyl shikimate-3-phosphate and inorganic phosphate. The chain is 3-phosphoshikimate 1-carboxyvinyltransferase from Streptococcus suis (strain 98HAH33).